The chain runs to 137 residues: MSAERTLILVKPDGVSRGLVGEVVGRIERKGLKIVALELRTLERSVAETHYGEHASKPFFGELVEFITSGPLVALVAEGPRAVEALRGLIGATDPVKAAPGSLRGDFALEIGQNLIHGSDSPESAKREIDLFFPGLS.

ATP-binding residues include Lys-11, Phe-59, Arg-87, Thr-93, Arg-104, and Asn-114. Catalysis depends on His-117, which acts as the Pros-phosphohistidine intermediate.

It belongs to the NDK family. As to quaternary structure, homotetramer. It depends on Mg(2+) as a cofactor.

It is found in the cytoplasm. The enzyme catalyses a 2'-deoxyribonucleoside 5'-diphosphate + ATP = a 2'-deoxyribonucleoside 5'-triphosphate + ADP. It catalyses the reaction a ribonucleoside 5'-diphosphate + ATP = a ribonucleoside 5'-triphosphate + ADP. Its function is as follows. Major role in the synthesis of nucleoside triphosphates other than ATP. The ATP gamma phosphate is transferred to the NDP beta phosphate via a ping-pong mechanism, using a phosphorylated active-site intermediate. In Parafrankia sp. (strain EAN1pec), this protein is Nucleoside diphosphate kinase.